Consider the following 103-residue polypeptide: Small ribosomal subunit protein uS10 (103 aa).

Belongs to the universal ribosomal protein uS10 family. As to quaternary structure, part of the 30S ribosomal subunit.

In terms of biological role, involved in the binding of tRNA to the ribosomes. The chain is Small ribosomal subunit protein uS10 from Jannaschia sp. (strain CCS1).